A 1673-amino-acid chain; its full sequence is MNFLSAIESRTAQAASSGTTLLPQFRAPSWQTGMHSSTATELFVTGALQTSGTFPTSALTAYQHPNTFSSRNFATTPSLALQDGTFSAATNGLLSPHDPLLQIKTSQTPTALTFERIGSAVLSTSIPQSSTYRSAQESAPHLLQPQFSLLPSALGGTQQPAQPYSTSVFTGSTASIERALQRECSVIKHHQRPSSTQSVQAQLSGTQHSLPNYLTSVSGVSLHDASRQSSLLCAPLGALTHVSNGGPVQKTSQVSVELSQSYPSVIPSPGYPPSSTKSKNCPTKAPPRSSKTPKSQSVVSPELTQSYTKSSQNQSSVNSSQAQAFSTAQLPSLLSVSQPPIYVSTQSPNLPSASQSQVFSTIKTEKLPPLYKPLTVFSSQSQTITSGSQTLSYSSDQSLSLSSVSSETYSDQTRDLSSANQSQSYSSNNSQGLTSVSQSQVSYSSQSQVMSPVSPSDSYTSGQNQTLASPSLPFSTSSRGQNLSSSSPTQNFISMHPTPNTQDSTSPQSQKFLPSVQPSSFASSPHSQTMQNSRTTADSKSYVKRKSDTNLYASAKQEEKFQMQDLQALQQTALETATPGLSEGELNTQETAYSVSKADDRYSHSVIKSNSRMEEQVLGLQGTKKDERLISPVGHMPQHVGHLNNSASHDGKKNTDLIQSTQVSAKDLSQHTMLHKVLDTKMQEQPSTSPQLQAAMRHSQHLQLPGAQVLLDSGCDLQMFQQSMLQSNMGQTKPSAQMQRIQSPPQVAHPFLQMDGQIIQSNGAQSQQSLHAQGSDVIKMDTSNGKHLQQHLHTKDHFSHRGRLDSKNQFDSLNPMCFSESMLLTDERNFLSHVDDILAATAAQEFAKSSNEENLSVKNQDAKSRFQSLNVRHMSPNFTPPKPQNMNNLSINGSQSAVNLSTVSTTQPKNVSLDQTHIQPMEQDLPSGMVSPVPGANQDDHEKNSENIKNPPNVNQEPKEGGNIQEEVGDAEFLSNNKTLSEENTTTEGDFIMGGDENAALGQVQSHLSKIDPQAGGSSTIEMEEDCPDISQDGQQKGKDKMAIKQFTEDENANLKQIKRNMPLKRSVSKGPDVPGAQYSSHVSEGYYDSYQHQERMRQKIKEVEEKQPEVKTGFIASFLDFLKTGPKQQFSAPAVRVPSRVRRPCTPVIRPPCPGPLSPQSVAGAPVSDSGSASPPKKAEEDLKKNLETLPSFSSDEDDATVGNNDLQKSISTALSALDENSEKRLKTEGDKAALSAKQDPSTPRNGQDKTKAPESLKPSQPEATQPEQLAKSQETIAIEGFTDEENTESGGEGIYRERDEFVVKIEDIELLKEALCTGKEPPAIWKVQKALLQKFIPEIKDGQRSFAATNSYLGYFGDAKTKYKRVYVKFVENANKKEYVRVCSRKPKSKVLQPARTTHTKASGGSKVSETPPPKTAPPKVVSAKPKAKPQKTKAEPPPKKRKQWKEEFSSSQSDSSPDMQSDEEEFAPPPPPIVTRFLNTRAMKETFKGYVELLVGLTLDGDMMQNLEKENDDVLLPHMRKIEGMLNENRRRLLTKLQLEQPLKNALENYPDFAIISRETKSKSAACKIKVNGKWYNKKTLRPAKNPSKQSQEFPVEPEKSQLCSLYHALHHYKYHIYLKCKEEVSSVQKANRDLKQEELVNHCLKNIKWVEDLFEKFGELLSRVQQTCS.

Disordered stretches follow at residues 265–322, 411–543, 872–892, 923–961, 1050–1081, 1149–1182, 1216–1272, and 1390–1476; these read VIPS…SSQA, DQTR…KSYV, RHMSPNFTPPKPQNMNNLSIN, QDLPSGMVSPVPGANQDDHEKNSENIKNPPNVNQEPKEG, DENANLKQIKRNMPLKRSVSKGPDVPGAQYSS, VIRPPCPGPLSPQSVAGAPVSDSGSASPPKKAEE, LSAL…EQLA, and KSKV…PPPI. A compositionally biased stretch (polar residues) spans 289–309; it reads SSKTPKSQSVVSPELTQSYTK. Low complexity-rich tracts occupy residues 310–322 and 411–458; these read SSQNQSSVNSSQA and DQTR…PSDS. The span at 459–539 shows a compositional bias: polar residues; it reads YTSGQNQTLA…MQNSRTTADS (81 aa). Residues 947 to 956 show a composition bias toward polar residues; the sequence is NIKNPPNVNQ. Positions 1222 to 1233 are enriched in basic and acidic residues; it reads NSEKRLKTEGDK. Composition is skewed to polar residues over residues 1259–1272 and 1397–1411; these read KPSQPEATQPEQLA and ARTTHTKASGGSKVS. Residues 1435–1451 are compositionally biased toward basic and acidic residues; the sequence is TKAEPPPKKRKQWKEEF. Low complexity predominate over residues 1452–1462; that stretch reads SSSQSDSSPDM.

It localises to the chromosome. Its function is as follows. Plays an essential role in the protection and maintenance of transcriptional and developmental programs. Protects many bivalent promoters and poised enhancers from hypermethylation, showing a marked preference for these regulatory elements over other types of promoters or enhancers. Mechanistically, cooperates with tet1 and binds to DNA in a common complex to inhibit the binding of dnmt3a/3b and therefore de novo methylation. The polypeptide is Glutamine and serine-rich protein 1 (qser1) (Xenopus laevis (African clawed frog)).